The sequence spans 172 residues: Shikimate kinase (172 aa).

ATP is bound at residue 11 to 16 (GAGKST). Serine 15 lines the Mg(2+) pocket. Residues aspartate 33, arginine 57, and glycine 79 each contribute to the substrate site. Position 117 (arginine 117) interacts with ATP. Arginine 136 is a substrate binding site. Arginine 153 is an ATP binding site.

Belongs to the shikimate kinase family. As to quaternary structure, monomer. Mg(2+) serves as cofactor.

The protein localises to the cytoplasm. The catalysed reaction is shikimate + ATP = 3-phosphoshikimate + ADP + H(+). It functions in the pathway metabolic intermediate biosynthesis; chorismate biosynthesis; chorismate from D-erythrose 4-phosphate and phosphoenolpyruvate: step 5/7. Catalyzes the specific phosphorylation of the 3-hydroxyl group of shikimic acid using ATP as a cosubstrate. This chain is Shikimate kinase, found in Pseudomonas putida (strain ATCC 700007 / DSM 6899 / JCM 31910 / BCRC 17059 / LMG 24140 / F1).